A 242-amino-acid polypeptide reads, in one-letter code: UPF0246 protein SPD_1378 (242 aa).

This sequence belongs to the UPF0246 family.

In Streptococcus pneumoniae serotype 2 (strain D39 / NCTC 7466), this protein is UPF0246 protein SPD_1378.